Reading from the N-terminus, the 89-residue chain is Phosphocarrier protein HPr (89 aa).

Residues M1 to D88 enclose the HPr domain. Residue H15 is the Pros-phosphohistidine intermediate of the active site. Residue S46 is modified to Phosphoserine; by HPrK/P.

This sequence belongs to the HPr family.

It localises to the cytoplasm. With respect to regulation, phosphorylation on Ser-46 inhibits the phosphoryl transfer from enzyme I to HPr. Functionally, general (non sugar-specific) component of the phosphoenolpyruvate-dependent sugar phosphotransferase system (sugar PTS). This major carbohydrate active-transport system catalyzes the phosphorylation of incoming sugar substrates concomitantly with their translocation across the cell membrane. The phosphoryl group from phosphoenolpyruvate (PEP) is transferred to the phosphoryl carrier protein HPr by enzyme I. Phospho-HPr then transfers it to the PTS EIIA domain. The chain is Phosphocarrier protein HPr (ptsH) from Xylella fastidiosa (strain 9a5c).